Reading from the N-terminus, the 105-residue chain is Large ribosomal subunit protein eL36 (105 aa).

Lys-62 bears the N6-acetyllysine mark.

This sequence belongs to the eukaryotic ribosomal protein eL36 family. As to quaternary structure, component of the large ribosomal subunit.

It is found in the cytoplasm. The protein resides in the cytosol. In terms of biological role, component of the large ribosomal subunit. The ribosome is a large ribonucleoprotein complex responsible for the synthesis of proteins in the cell. The chain is Large ribosomal subunit protein eL36 (RPL36) from Bos taurus (Bovine).